Here is a 484-residue protein sequence, read N- to C-terminus: Glucan endo-1,3-beta-glucosidase 5 (484 aa).

Residues 1–26 form the signal peptide; it reads MLFKGVFAVFFVITLLYASLLIEVEG. A glycan (N-linked (GlcNAc...) asparagine) is linked at Asn-102. The active-site Proton donor is the Glu-122. Residues Asn-129 and Asn-260 are each glycosylated (N-linked (GlcNAc...) asparagine). Residue Glu-267 is the Nucleophile of the active site. Residues Cys-366 and Cys-428 are joined by a disulfide bond. A glycan (N-linked (GlcNAc...) asparagine) is linked at Asn-409. Residue Ala-460 is the site of GPI-anchor amidated alanine attachment. A propeptide spans 461-484 (removed in mature form); it reads SAMMPITRSTAVLLLLSICLYIVL.

The protein belongs to the glycosyl hydrolase 17 family. Contains two additional disulfide bonds.

It is found in the cell membrane. The catalysed reaction is Hydrolysis of (1-&gt;3)-beta-D-glucosidic linkages in (1-&gt;3)-beta-D-glucans.. This chain is Glucan endo-1,3-beta-glucosidase 5, found in Arabidopsis thaliana (Mouse-ear cress).